The following is a 323-amino-acid chain: NAC transcription factor 25 (323 aa).

The NAC domain occupies 16–177 (LPPGFRFHPT…DWVLCRIYKK (162 aa)). A DNA-binding region spans residues 114–183 (VGVKKALVFY…IYKKNSSQRP (70 aa)). The span at 201–221 (KSSANSSSTSVLDNNDNNNNN) shows a compositional bias: low complexity. Positions 201 to 223 (KSSANSSSTSVLDNNDNNNNNNE) are disordered.

In terms of tissue distribution, expressed specifically in the tapetum.

The protein localises to the nucleus. Its function is as follows. Transcription factor of the NAC family. May be associated with anther development and pollen production. Required for normal seed development and morphology. The polypeptide is NAC transcription factor 25 (NAC025) (Arabidopsis thaliana (Mouse-ear cress)).